We begin with the raw amino-acid sequence, 706 residues long: Protein argonaute (706 aa).

Residues 1 to 108 are N-terminal domain; sequence MGKEALLNLY…ELFRDFLTKT (108 aa). The tract at residues 109–165 is linker L1; it reads KVKDKFISDFYKKFRDKITVQGKNRKIALIPEVNEKVLKSEEGYFLLHLDLKFRIQP. The PAZ domain occupies 168-259; that stretch reads TLQTLLERND…YPATILKPVL (92 aa). The tract at residues 263-334 is linker L2; sequence NLEDEERNEV…AKGKNTKVIT (72 aa). Residues 335–448 are mid domain; sequence NLRKFLELCR…YDFVKRELLK (114 aa). The Piwi domain maps to 419–694; sequence LVIVFLEEYP…ITKLMLRGIE (276 aa). The PIWI domain stretch occupies residues 449–706; that stretch reads KMIPSQVILN…KKEGDIMYWL (258 aa). Active-site residues include Asp-502, Glu-541, and Asp-571. A Mn(2+)-binding site is contributed by Asp-502. Asp-571 is a binding site for Mn(2+). The interval 612–650 is PIWI box; that stretch reads FIKGYFYKLSEDSVILATYNQVYEGTHQPIKVRKVYGEL. Asp-683 is an active-site residue. Asp-683 is a binding site for Mn(2+).

Belongs to the argonaute family. Long pAgo subfamily. Requires Mg(2+) as cofactor.

Functionally, a DNA-guided RNA endonuclease. Uses short ssDNA sequences as guides (gDNA) to bind complementary target strands, resulting in cleavage of the target RNA. The cleavage site is 10 nucleotides downstream of the residue base paired with the 5'-end of the gDNA. Binds ssDNA better than ssRNA, binds dsDNA and DNA-RNA hybrids but does not bind dsRNA. A 2 nucleotide 3'-overhang (possibly on the guide strand) may help load nucleic acids into the complex. This is Protein argonaute from Aquifex aeolicus (strain VF5).